The following is a 356-amino-acid chain: uncharacterized protein (356 aa).

Transmembrane regions (helical) follow at residues 2-22, 35-55, 76-96, 99-119, 124-144, and 152-172; these read IESI…FHRL, GYVT…PIPF, NMGY…FAFG, LLYG…GPFL, IVAL…LSIF, and EIAF…ITFV. A GGDEF domain is found at 218–353; it reads ESLALLLIDI…GRNQVMFNPI (136 aa).

The protein localises to the cell membrane. This is an uncharacterized protein from Staphylococcus haemolyticus (strain JCSC1435).